The following is a 99-amino-acid chain: C-C motif chemokine 17 (99 aa).

Residues 1-23 form the signal peptide; it reads MMSLKLLLLVMLLLGASLQVTHA. 2 cysteine pairs are disulfide-bonded: cysteine 33-cysteine 57 and cysteine 34-cysteine 73.

The protein belongs to the intercrine beta (chemokine CC) family. Expressed in thymus and also in spleen, lung, lymph node, kidney, small intestine, colon and skin.

It is found in the secreted. Chemokine, which displays chemotactic activity for T lymphocytes, preferentially Th2 cells, but not monocytes or granulocytes. Therefore plays an important role in a wide range of inflammatory and immunological processes. Acts by binding to CCR4 at T-cell surface. Mediates GM-CSF/CSF2-driven pain and inflammation. In the brain, required to maintain the typical, highly branched morphology of hippocampal microglia under homeostatic conditions. May be important for the appropriate adaptation of microglial morphology and synaptic plasticity to acute lipopolysaccharide (LPS)-induced neuroinflammation. Plays a role in wound healing, mainly by inducing fibroblast migration into the wound. The protein is C-C motif chemokine 17 (CCL17) of Felis catus (Cat).